We begin with the raw amino-acid sequence, 398 residues long: Arylacetamide deacetylase (398 aa).

Topologically, residues 1-5 are cytoplasmic; the sequence is MGKTI. A helical; Signal-anchor for type II membrane protein transmembrane segment spans residues 6–26; that stretch reads SLLISVVLVAYYLYIPLPDAI. The Lumenal portion of the chain corresponds to 27-398; sequence EEPWKVVWET…QYLSWLIKNL (372 aa). The Involved in the stabilization of the negatively charged intermediate by the formation of the oxyanion hole signature appears at 110-112; sequence HGG. Cysteines 115 and 339 form a disulfide. Ser188 is a catalytic residue. The N-linked (GlcNAc...) asparagine glycan is linked to Asn281. Catalysis depends on residues Asp342 and His372.

This sequence belongs to the 'GDXG' lipolytic enzyme family. In terms of processing, N-glycosylated. Highest levels in liver with lower levels in jejunum and kidney.

The protein localises to the endoplasmic reticulum membrane. Its subcellular location is the microsome membrane. The enzyme catalyses a triacylglycerol + H2O = a diacylglycerol + a fatty acid + H(+). In terms of biological role, displays cellular triglyceride lipase activity in liver, increases the levels of intracellular fatty acids derived from the hydrolysis of newly formed triglyceride stores and plays a role in very low-density lipoprotein assembly. Displays serine esterase activity in liver. Deacetylates a variety of arylacetamide substrates, including xenobiotic compounds and procarcinogens, converting them to the primary arylamide compounds and increasing their toxicity. The polypeptide is Arylacetamide deacetylase (Aadac) (Mus musculus (Mouse)).